The primary structure comprises 301 residues: Small ribosomal subunit biogenesis GTPase RsgA (301 aa).

Residues 63–224 (INALVRPPIA…IADTPGFSSY (162 aa)) form the CP-type G domain. GTP is bound by residues 112–115 (SKAD) and 167–175 (GQTGAGKST). Positions 248, 253, 255, and 261 each coordinate Zn(2+).

This sequence belongs to the TRAFAC class YlqF/YawG GTPase family. RsgA subfamily. In terms of assembly, monomer. Associates with 30S ribosomal subunit, binds 16S rRNA. Zn(2+) is required as a cofactor.

The protein localises to the cytoplasm. In terms of biological role, one of several proteins that assist in the late maturation steps of the functional core of the 30S ribosomal subunit. Helps release RbfA from mature subunits. May play a role in the assembly of ribosomal proteins into the subunit. Circularly permuted GTPase that catalyzes slow GTP hydrolysis, GTPase activity is stimulated by the 30S ribosomal subunit. In Leuconostoc citreum (strain KM20), this protein is Small ribosomal subunit biogenesis GTPase RsgA.